Reading from the N-terminus, the 415-residue chain is UDP-galactose transporter homolog 1 (415 aa).

Residues 1 to 39 are disordered; it reads MHLVPEGSESMSTQQNGSAQKPVTLNGSASTKGQAPEAP. Positions 9–33 are enriched in polar residues; that stretch reads ESMSTQQNGSAQKPVTLNGSASTKG. 2 N-linked (GlcNAc...) asparagine glycosylation sites follow: N16 and N26. The next 5 membrane-spanning stretches (helical) occupy residues 45-65, 95-115, 132-152, 161-181, and 185-205; these read LIQL…WGVL, IVLN…YLYF, ILFP…FGYA, TFIL…LTIF, and YPLY…TFTL. N-linked (GlcNAc...) asparagine glycosylation is present at N221. Residues 223–243 traverse the membrane as a helical segment; sequence SGSSLYGIFLLSINLLLDGLT. An N-linked (GlcNAc...) asparagine glycan is attached at N244. A run of 3 helical transmembrane segments spans residues 281–301, 325–345, and 368–388; these read LLVM…PIPI, NVLG…YTLS, and VFWF…LVFG.

Belongs to the nucleotide-sugar transporter family. SLC35B subfamily.

Its subcellular location is the endoplasmic reticulum membrane. May be involved in specific transport of UDP-Gal from the cytosol to the Golgi lumen. Involved in the maintenance of optimal conditions for the folding of secretory pathway proteins in the endoplasmic reticulum. The chain is UDP-galactose transporter homolog 1 (hut1) from Aspergillus fumigatus (strain ATCC MYA-4609 / CBS 101355 / FGSC A1100 / Af293) (Neosartorya fumigata).